Consider the following 264-residue polypeptide: Type III pantothenate kinase (264 aa).

6-13 lines the ATP pocket; that stretch reads DVRNTSIE. 109-112 is a substrate binding site; sequence GADR. Catalysis depends on aspartate 111, which acts as the Proton acceptor. Position 131 (aspartate 131) interacts with K(+). Residue threonine 134 coordinates ATP. Residue threonine 185 participates in substrate binding.

This sequence belongs to the type III pantothenate kinase family. As to quaternary structure, homodimer. It depends on NH4(+) as a cofactor. Requires K(+) as cofactor.

The protein localises to the cytoplasm. It carries out the reaction (R)-pantothenate + ATP = (R)-4'-phosphopantothenate + ADP + H(+). It functions in the pathway cofactor biosynthesis; coenzyme A biosynthesis; CoA from (R)-pantothenate: step 1/5. Catalyzes the phosphorylation of pantothenate (Pan), the first step in CoA biosynthesis. The polypeptide is Type III pantothenate kinase (Nocardia farcinica (strain IFM 10152)).